We begin with the raw amino-acid sequence, 1384 residues long: DNA-directed RNA polymerase subunit beta'' (1384 aa).

The Zn(2+) site is built by C224, C297, C304, and C307.

The protein belongs to the RNA polymerase beta' chain family. RpoC2 subfamily. In plastids the minimal PEP RNA polymerase catalytic core is composed of four subunits: alpha, beta, beta', and beta''. When a (nuclear-encoded) sigma factor is associated with the core the holoenzyme is formed, which can initiate transcription. It depends on Zn(2+) as a cofactor.

Its subcellular location is the plastid. The protein resides in the chloroplast. The catalysed reaction is RNA(n) + a ribonucleoside 5'-triphosphate = RNA(n+1) + diphosphate. Its function is as follows. DNA-dependent RNA polymerase catalyzes the transcription of DNA into RNA using the four ribonucleoside triphosphates as substrates. In Sinapis alba (White mustard), this protein is DNA-directed RNA polymerase subunit beta''.